A 561-amino-acid chain; its full sequence is Putative transport protein YbjL (561 aa).

Transmembrane regions (helical) follow at residues 8 to 28 (LLNGNYILLLFVVLALGLCLG), 32 to 52 (LGSIQLGNSIGVLVVSLLLGQ), 66 to 86 (FMLFIFCVGVEAGPNFFSIFF), 94 to 114 (MLALVMVGSALVIALGLGKLF), and 158 to 178 (NLSLGYALTYLIGLVSLIVGA). 2 RCK C-terminal domains span residues 200 to 288 (RGLD…SFRN) and 292 to 373 (VFDR…RIGF). Transmembrane regions (helical) follow at residues 383–403 (LLAFCAFFVIGLMIGMITFQF), 406–426 (FSFGMGNAAGLLFAGIMLGFM), 451–471 (VFMAGVGLSAGSGINNGLGAI), 475–495 (MLIAGLIVSLVPVVICFLFGA), and 540–560 (AIANVLLTLAGTIIVMVWPGL).

This sequence belongs to the AAE transporter (TC 2.A.81) family. YbjL subfamily.

It is found in the cell membrane. The polypeptide is Putative transport protein YbjL (Shigella boydii serotype 4 (strain Sb227)).